The following is a 282-amino-acid chain: Ubiquinone biosynthesis protein COQ4 homolog, mitochondrial (282 aa).

Residues 1 to 30 constitute a mitochondrion transit peptide; it reads MFVRKSCYSLINATRRCLRYRQLSSTTAGT. Positions 186, 187, 190, and 202 each coordinate Zn(2+).

This sequence belongs to the COQ4 family. As to quaternary structure, component of a multi-subunit COQ enzyme complex. Zn(2+) is required as a cofactor.

The protein localises to the mitochondrion inner membrane. The enzyme catalyses a 4-hydroxy-3-methoxy-5-(all-trans-polyprenyl)benzoate + H(+) = a 2-methoxy-6-(all-trans-polyprenyl)phenol + CO2. It participates in cofactor biosynthesis; ubiquinone biosynthesis. Functionally, lyase that catalyzes the C1-decarboxylation of 4-hydroxy-3-methoxy-5-(all-trans-polyprenyl)benzoic acid into 2-methoxy-6-(all-trans-polyprenyl)phenol during ubiquinone biosynthesis. The chain is Ubiquinone biosynthesis protein COQ4 homolog, mitochondrial from Anopheles gambiae (African malaria mosquito).